The sequence spans 423 residues: Imidazolonepropionase (423 aa).

Residues His-78 and His-80 each contribute to the Fe(3+) site. Zn(2+)-binding residues include His-78 and His-80. Residues Arg-87, Tyr-150, and His-183 each coordinate 4-imidazolone-5-propanoate. Tyr-150 lines the N-formimidoyl-L-glutamate pocket. His-247 lines the Fe(3+) pocket. Residue His-247 participates in Zn(2+) binding. A 4-imidazolone-5-propanoate-binding site is contributed by Glu-250. Asp-322 is a Fe(3+) binding site. Zn(2+) is bound at residue Asp-322. N-formimidoyl-L-glutamate contacts are provided by Asn-324 and Gly-326. Ser-327 is a binding site for 4-imidazolone-5-propanoate.

This sequence belongs to the metallo-dependent hydrolases superfamily. HutI family. Zn(2+) serves as cofactor. Requires Fe(3+) as cofactor.

It is found in the cytoplasm. It carries out the reaction 4-imidazolone-5-propanoate + H2O = N-formimidoyl-L-glutamate. The protein operates within amino-acid degradation; L-histidine degradation into L-glutamate; N-formimidoyl-L-glutamate from L-histidine: step 3/3. Catalyzes the hydrolytic cleavage of the carbon-nitrogen bond in imidazolone-5-propanoate to yield N-formimidoyl-L-glutamate. It is the third step in the universal histidine degradation pathway. The sequence is that of Imidazolonepropionase from Bacillus cereus (strain B4264).